The primary structure comprises 577 residues: MPCIQAQHGSLSQCAGPCDNYVPDILNSEFGKFTMDLVNSEIAASTSLPSFSTFMDGYTGEFDAFLYQIPSSNQQSSLKVEEFQVFGCYPGSFTNQLDETMSSSGSDYYGSPCSIPSPSTPGFQNPQLPTWECSYGAYSPTQNYDNMRHWTEQQKNSISQQTFFSFGTPAHSPNMAANPLKIAPATHRLDQQLVDTDVFALAQNSSAGFPAVPLGQAPGVLDSSVLLDSPLSPSKTRSPSSNEGRCAVCGDNASCQHYGVRTCEGCKGFFKRTVQKNAKYICLANKDCPVDKRRRNRCQFCRFQKCLVVGMVKEVVRTDSLKGRRGRLPSKPKQIAESSPVDLINSLVRAHIDSIPSSSKLDYSKFQETVPLQLEKESSVDVQQFYDLLSGSLEVIRKWAEKIQGFVDLPKEDQDLLLESAFLELFILRLAYRSRPEEGKLIFCNGVVLHRTQCVRGFGEWIDSIIEFSHSLQRMNIDVPSFSCLSALVIVTDRHGLKEPKKVEELQSQIINCLKEHIPSSMNEQNRPNCLSKLLGKLPELRTLCTQGLQRIFYLKLEDLVPPPPIVDKIFMDTLPF.

The nuclear receptor DNA-binding region spans 243 to 318 (EGRCAVCGDN…VGMVKEVVRT (76 aa)). NR C4-type zinc fingers lie at residues 246–266 (CAVCGDNASCQHYGVRTCEGC) and 282–311 (CLANKDCPVDKRRRNRCQFCRFQKCLVVGM). Positions 247–333 (AVCGDNASCQ…RRGRLPSKPK (87 aa)) are required for binding NBRE-containing DNA. The 236-residue stretch at 339-574 (SPVDLINSLV…PIVDKIFMDT (236 aa)) folds into the NR LBD domain. The tract at residues 500-523 (PKKVEELQSQIINCLKEHIPSSMN) is may bind lipopolysaccharide. The AF-2 stretch occupies residues 563–574 (PPPIVDKIFMDT).

Belongs to the nuclear hormone receptor family. NR4 subfamily. Requires Zn(2+) as cofactor.

The protein localises to the nucleus. It is found in the cytoplasm. The protein resides in the cytosol. Functionally, orphan nuclear receptor. Binds the NGFI-B response element (NBRE) 5'-AAAAGGTCA-3'. In terms of biological role, in the cytosol, may detect bacterial lipopolysaccharide (LPS) and NBRE-containing mitochondrial DNA released during pyroptosis, and play a role in non-canonical inflammasome activation. The protein is Nuclear receptor subfamily 4 group A member 1 (nr4a1) of Xenopus laevis (African clawed frog).